A 296-amino-acid chain; its full sequence is Mycothiol acetyltransferase (296 aa).

2 N-acetyltransferase domains span residues 1-148 and 151-296; these read MTEW…IRVD and VTVR…YGRA. Glu-34 lines the 1D-myo-inositol 2-(L-cysteinylamino)-2-deoxy-alpha-D-glucopyranoside pocket. Acetyl-CoA is bound by residues 79–81 and 87–92; these read LVV and RRGIGS. Residues Glu-178, Lys-219, and Glu-229 each contribute to the 1D-myo-inositol 2-(L-cysteinylamino)-2-deoxy-alpha-D-glucopyranoside site. Residues 233–235 and 240–246 contribute to the acetyl-CoA site; these read VGV and QGRGLGH. Tyr-267 contacts 1D-myo-inositol 2-(L-cysteinylamino)-2-deoxy-alpha-D-glucopyranoside. Residue 272–277 coordinates acetyl-CoA; it reads NQAALR.

The protein belongs to the acetyltransferase family. MshD subfamily. In terms of assembly, monomer.

The catalysed reaction is 1D-myo-inositol 2-(L-cysteinylamino)-2-deoxy-alpha-D-glucopyranoside + acetyl-CoA = mycothiol + CoA + H(+). Functionally, catalyzes the transfer of acetyl from acetyl-CoA to desacetylmycothiol (Cys-GlcN-Ins) to form mycothiol. In Mycobacteroides abscessus (strain ATCC 19977 / DSM 44196 / CCUG 20993 / CIP 104536 / JCM 13569 / NCTC 13031 / TMC 1543 / L948) (Mycobacterium abscessus), this protein is Mycothiol acetyltransferase.